The sequence spans 217 residues: Ras-related protein RABA1e (217 aa).

20 to 27 is a binding site for GTP; sequence GDSGVGKS. The Effector region motif lies at 42-50; that stretch reads SKSTIGVEF. GTP-binding positions include 68-72, 126-129, and 156-157; these read DTAGQ, NKAD, and SA. Residues Cys-214 and Cys-215 are each lipidated (S-geranylgeranyl cysteine).

It belongs to the small GTPase superfamily. Rab family.

It localises to the cell membrane. Intracellular vesicle trafficking and protein transport. The chain is Ras-related protein RABA1e (RABA1E) from Arabidopsis thaliana (Mouse-ear cress).